The following is a 305-amino-acid chain: Protein EXORDIUM-like 2 (305 aa).

A signal peptide spans 1–23 (MASNYRFAIFLTLFFATAGFSAA). N-linked (GlcNAc...) asparagine glycosylation occurs at Asn44.

Belongs to the EXORDIUM family.

Its subcellular location is the secreted. It localises to the extracellular space. It is found in the apoplast. Functionally, may play a role in a brassinosteroid-dependent regulation of growth and development. This Arabidopsis thaliana (Mouse-ear cress) protein is Protein EXORDIUM-like 2 (EXL2).